The following is a 558-amino-acid chain: MSAHYATEPAPTASATLHTTFGPLHIALFAKQTPLTCRNFLQHCMDNYYAGTIFHRVVPDFIIQGGDPTGTGSGGTSIYEYPEFEYDPDARDPNEKVVLRDEIHSRLRFNRRGLVGMAKSEDGSYGSQFFITLANTERELNGQCTLFGRLEGDSLYNMLKIAEAERIEGTERPVYPVKITSCEVGDLGPFVDKVKKRQVVATGPKTEEKPAAKKKKKAKPGKALLSFGGDDEEDEDMPIRPAKPKFNPMLVTDTKLPEKESSTKGEASQTRKRPRSPSPKRQPQPSAPPKNRPKTPEPTKQLPLPNPESPERSPSPPPKQSFLSRTNAEIENLKASMRRTAHAPAAETKPKSALEAMIPQTAIRGRKRPPPGSVSASTSAPNGITGFSSNSAEAEALKMFNAFRAKLESSDSQPTAAAAKRLSVAKTDAAEERKETPDEDEESQLCDLHFIANCQSCKSWDNDVEGGANNGADDDVNDSGWLNHQLRFGKDTLGKDLNWKREHQDVDTLMVIDPREKEKELADSSRPGTKRVKGRGLERDRERERKKGRVGDLEWSKR.

Positions 11–184 (PTASATLHTT…YPVKITSCEV (174 aa)) constitute a PPIase cyclophilin-type domain. Disordered regions lie at residues 201-388 (ATGP…TGFS), 408-443 (ESSDSQPTAAAAKRLSVAKTDAAEERKETPDEDEES), and 510-558 (MVID…WSKR). Composition is skewed to pro residues over residues 276-290 (SPSPKRQPQPSAPPK) and 304-319 (LPNPESPERSPSPPPK). Over residues 374–388 (VSASTSAPNGITGFS) the composition is skewed to polar residues. Composition is skewed to basic and acidic residues over residues 513-523 (DPREKEKELAD) and 535-558 (RGLERDRERERKKGRVGDLEWSKR).

It belongs to the cyclophilin-type PPIase family. CWC27 subfamily. As to quaternary structure, associated with the spliceosome.

The protein localises to the cytoplasm. It localises to the nucleus. The enzyme catalyses [protein]-peptidylproline (omega=180) = [protein]-peptidylproline (omega=0). Functionally, PPIases accelerate the folding of proteins. It catalyzes the cis-trans isomerization of proline imidic peptide bonds in oligopeptides. Involved in pre-mRNA splicing. This is Peptidyl-prolyl isomerase cwc27 (cwc27) from Emericella nidulans (strain FGSC A4 / ATCC 38163 / CBS 112.46 / NRRL 194 / M139) (Aspergillus nidulans).